Here is a 375-residue protein sequence, read N- to C-terminus: Fluoride export protein 2 (375 aa).

Over methionine 1–lysine 11 the chain is Cytoplasmic. The helical transmembrane segment at leucine 12–threonine 32 threads the bilayer. Residues arginine 33–glutamine 34 lie on the Extracellular side of the membrane. A helical transmembrane segment spans residues alanine 35 to serine 55. The Cytoplasmic portion of the chain corresponds to asparagine 56 to glutamine 79. A helical transmembrane segment spans residues valine 80 to leucine 100. Residues leucine 101–glycine 127 lie on the Extracellular side of the membrane. N-linked (GlcNAc...) asparagine glycans are attached at residues asparagine 109 and asparagine 117. Residues isoleucine 128–phenylalanine 148 form a helical membrane-spanning segment. The Cytoplasmic portion of the chain corresponds to glycine 149–lysine 213. A helical membrane pass occupies residues leucine 214–glutamate 234. Residue asparagine 235 is glycosylated (N-linked (GlcNAc...) asparagine). Over asparagine 235–tryptophan 241 the chain is Extracellular. The helical transmembrane segment at threonine 242–phenylalanine 262 threads the bilayer. The Cytoplasmic portion of the chain corresponds to asparagine 263 to lysine 268. The helical transmembrane segment at phenylalanine 269–methionine 289 threads the bilayer. Residues valine 290–cysteine 310 are Extracellular-facing. The helical transmembrane segment at histidine 311 to isoleucine 331 threads the bilayer. At asparagine 332–serine 338 the chain is on the cytoplasmic side. The chain crosses the membrane as a helical span at residues phenylalanine 339–isoleucine 359. The Extracellular portion of the chain corresponds to threonine 360–cysteine 375.

This sequence belongs to the fluoride channel Fluc/FEX (TC 1.A.43) family.

It localises to the cell membrane. The catalysed reaction is fluoride(in) = fluoride(out). In terms of biological role, fluoride channel required for the rapid expulsion of cytoplasmic fluoride. This chain is Fluoride export protein 2, found in Saccharomyces cerevisiae (strain ATCC 204508 / S288c) (Baker's yeast).